We begin with the raw amino-acid sequence, 1446 residues long: Sister chromatid cohesion protein PDS5 homolog B (1446 aa).

An HEAT repeat occupies 383–419; the sequence is LLVNDHLLNFVRERTLDKRWRVRKEAMMGLAQIYKKY. Residue K1136 is modified to N6-acetyllysine. Polar residues predominate over residues 1137-1155; the sequence is PLSSAGKQSQTKSSRMETV. The disordered stretch occupies residues 1137-1446; sequence PLSSAGKQSQ…RRRSSKRERR (310 aa). Phosphoserine is present on residues S1140, S1162, S1166, S1176, S1182, and S1191. Positions 1156-1167 are enriched in low complexity; the sequence is SNASSSSNPSSP. Positions 1172 to 1184 are enriched in basic and acidic residues; the sequence is GRLDSSEMDHSEN. Basic and acidic residues-rich tracts occupy residues 1196–1212 and 1223–1241; these read KKSDKREDPDLSELEKP and PEEKLGMDDLTKLVQEQKP. Positions 1243–1252 are enriched in basic residues; that stretch reads GSQRGRKRGR. Residues 1247 to 1259 constitute a DNA-binding region (a.T hook 1); the sequence is GRKRGRTASDSDE. A Phosphothreonine modification is found at T1253. Phosphoserine occurs at positions 1255 and 1257. A compositionally biased stretch (basic and acidic residues) spans 1263–1272; that stretch reads PEEKRHKEEL. S1281 bears the Phosphoserine mark. A DNA-binding region (a.T hook 2) is located at residues 1285 to 1297; sequence KGKRGRPPKPLGG. Basic residues-rich tracts occupy residues 1308–1317 and 1339–1351; these read TSKKGNKKKL and SKSKQHRTSKRAQ. The segment covering 1353–1370 has biased composition (polar residues); the sequence is RAESPETSAVESTQSTPQ. Residues S1356 and S1364 each carry the phosphoserine modification. A Phosphothreonine modification is found at T1365. S1367 bears the Phosphoserine mark. The residue at position 1368 (T1368) is a Phosphothreonine. The a.T hook 3 DNA-binding region spans 1370-1382; it reads QKGRGRPSKAPSP. Phosphoserine occurs at positions 1381, 1415, and 1418. Acidic residues predominate over residues 1421–1431; that stretch reads TTQEGAEEEDI. Residues 1436-1446 show a composition bias toward basic residues; the sequence is VRRRSSKRERR.

Belongs to the PDS5 family. In terms of assembly, interacts with the cohesin complex. Interacts with RAD21; the interaction is direct. Interacts with WAPL (via FGF motifs) or CDCA5 (via the FGF motif); the interaction is direct, cohesin-dependent and competitive. As to expression, expressed in prostate.

Its subcellular location is the nucleus. Its function is as follows. Regulator of sister chromatid cohesion in mitosis which may stabilize cohesin complex association with chromatin. May couple sister chromatid cohesion during mitosis to DNA replication. Cohesion ensures that chromosome partitioning is accurate in both meiotic and mitotic cells and plays an important role in DNA repair. Plays a role in androgen-induced proliferative arrest in prostate cells. This Mus musculus (Mouse) protein is Sister chromatid cohesion protein PDS5 homolog B (Pds5b).